Here is a 320-residue protein sequence, read N- to C-terminus: ATP-dependent 6-phosphofructokinase (320 aa).

Glycine 11 is an ATP binding site. 21–25 (RAVTK) is a binding site for ADP. Residues 72–73 (RF) and 102–105 (GDGS) contribute to the ATP site. Aspartate 103 contributes to the Mg(2+) binding site. Residue 125-127 (TID) participates in substrate binding. The active-site Proton acceptor is aspartate 127. Arginine 154 lines the ADP pocket. Residues arginine 162 and 169–171 (MGR) contribute to the substrate site. Residues 185–187 (GAD) and 213–215 (KDH) each bind ADP. Substrate contacts are provided by residues glutamate 222, arginine 243, and 249–252 (HMQR).

The protein belongs to the phosphofructokinase type A (PFKA) family. ATP-dependent PFK group I subfamily. Prokaryotic clade 'B1' sub-subfamily. Homotetramer. It depends on Mg(2+) as a cofactor.

The protein localises to the cytoplasm. The catalysed reaction is beta-D-fructose 6-phosphate + ATP = beta-D-fructose 1,6-bisphosphate + ADP + H(+). It participates in carbohydrate degradation; glycolysis; D-glyceraldehyde 3-phosphate and glycerone phosphate from D-glucose: step 3/4. With respect to regulation, allosterically activated by ADP and other diphosphonucleosides, and allosterically inhibited by phosphoenolpyruvate. Catalyzes the phosphorylation of D-fructose 6-phosphate to fructose 1,6-bisphosphate by ATP, the first committing step of glycolysis. The chain is ATP-dependent 6-phosphofructokinase from Lactobacillus acidophilus (strain ATCC 700396 / NCK56 / N2 / NCFM).